Consider the following 460-residue polypeptide: Argininosuccinate lyase (460 aa).

Belongs to the lyase 1 family. Argininosuccinate lyase subfamily.

The protein localises to the cytoplasm. The enzyme catalyses 2-(N(omega)-L-arginino)succinate = fumarate + L-arginine. Its pathway is amino-acid biosynthesis; L-arginine biosynthesis; L-arginine from L-ornithine and carbamoyl phosphate: step 3/3. This is Argininosuccinate lyase from Actinobacillus succinogenes (strain ATCC 55618 / DSM 22257 / CCUG 43843 / 130Z).